The following is a 291-amino-acid chain: uncharacterized protein (291 aa).

Solcar repeat units follow at residues 15-93 (PGPV…IKKS), 104-190 (PRTV…IKQS), and 201-287 (LSTV…VMEI). The next 6 helical transmembrane spans lie at 21 to 41 (IIAG…AEFA), 70 to 90 (STVI…FDSI), 108 to 128 (LAGL…FESI), 169 to 189 (TVAR…SIKQ), 201 to 221 (LSTV…VYCT), and 259 to 280 (FWSG…VFTV).

Belongs to the mitochondrial carrier (TC 2.A.29) family.

It localises to the mitochondrion inner membrane. This is an uncharacterized protein from Schizosaccharomyces pombe (strain 972 / ATCC 24843) (Fission yeast).